Here is a 152-residue protein sequence, read N- to C-terminus: MAKMHTRRKGRSRSTRPVRKTPPAWFTMSKEEVEKLVVKTYGQNATTSQVGIILRDKYGVPDITQVTGKKVTAILKENGTGPKLPEDLVNLIKKAIRLHKHLDENHKDLHNKRALQLTESKVRRLVKYYHATGVLPMDWVYSPATAEILISR.

A compositionally biased stretch (basic residues) spans 1–19 (MAKMHTRRKGRSRSTRPVR). Positions 1–21 (MAKMHTRRKGRSRSTRPVRKT) are disordered.

The protein belongs to the universal ribosomal protein uS15 family. In terms of assembly, part of the 30S ribosomal subunit.

The chain is Small ribosomal subunit protein uS15 from Methanocella arvoryzae (strain DSM 22066 / NBRC 105507 / MRE50).